We begin with the raw amino-acid sequence, 338 residues long: 1-aminocyclopropane-1-carboxylate deaminase (338 aa).

An N6-(pyridoxal phosphate)lysine modification is found at Lys51. Ser78 acts as the Nucleophile in catalysis.

It belongs to the ACC deaminase/D-cysteine desulfhydrase family. In terms of assembly, homotrimer. The cofactor is pyridoxal 5'-phosphate.

The enzyme catalyses 1-aminocyclopropane-1-carboxylate + H2O = 2-oxobutanoate + NH4(+). Its function is as follows. Catalyzes a cyclopropane ring-opening reaction, the irreversible conversion of 1-aminocyclopropane-1-carboxylate (ACC) to ammonia and alpha-ketobutyrate. Allows growth on ACC as a nitrogen source. The protein is 1-aminocyclopropane-1-carboxylate deaminase of Burkholderia cenocepacia (strain HI2424).